Consider the following 62-residue polypeptide: Photosystem II reaction center protein Z (62 aa).

Helical transmembrane passes span 8-28 and 41-61; these read TLFA…VVFA and FSGV…NSFV.

Belongs to the PsbZ family. PSII is composed of 1 copy each of membrane proteins PsbA, PsbB, PsbC, PsbD, PsbE, PsbF, PsbH, PsbI, PsbJ, PsbK, PsbL, PsbM, PsbT, PsbY, PsbZ, Psb30/Ycf12, at least 3 peripheral proteins of the oxygen-evolving complex and a large number of cofactors. It forms dimeric complexes.

The protein resides in the plastid. It is found in the chloroplast thylakoid membrane. In terms of biological role, may control the interaction of photosystem II (PSII) cores with the light-harvesting antenna, regulates electron flow through the 2 photosystem reaction centers. PSII is a light-driven water plastoquinone oxidoreductase, using light energy to abstract electrons from H(2)O, generating a proton gradient subsequently used for ATP formation. This Oltmannsiellopsis viridis (Marine flagellate) protein is Photosystem II reaction center protein Z.